The following is a 268-amino-acid chain: Fatty acid elongase sre1 (268 aa).

The next 7 membrane-spanning stretches (helical) occupy residues valine 31 to methionine 51, phenylalanine 62 to methionine 82, isoleucine 110 to isoleucine 130, proline 137 to leucine 157, tryptophan 161 to tyrosine 181, isoleucine 198 to valine 218, and alanine 227 to glycine 247.

This sequence belongs to the ELO family.

The protein resides in the membrane. The catalysed reaction is a very-long-chain acyl-CoA + malonyl-CoA + H(+) = a very-long-chain 3-oxoacyl-CoA + CO2 + CoA. Its function is as follows. Could be implicated in synthesis of very long chain fatty acids. The sequence is that of Fatty acid elongase sre1 (sre1) from Dictyostelium discoideum (Social amoeba).